We begin with the raw amino-acid sequence, 190 residues long: Elongation factor P-like protein (190 aa).

The protein belongs to the elongation factor P family.

The protein is Elongation factor P-like protein of Proteus mirabilis (strain HI4320).